The chain runs to 77 residues: Sec-independent protein translocase protein TatA (77 aa).

Residues 1-21 (MGSLSIWHWILVIAVVLLLFG) form a helical membrane-spanning segment. The span at 42-60 (GMQDDDKPADKPEPAKSIE) shows a compositional bias: basic and acidic residues. Residues 42–77 (GMQDDDKPADKPEPAKSIEHNAAPTAARSDVGSKAV) are disordered.

The protein belongs to the TatA/E family. The Tat system comprises two distinct complexes: a TatABC complex, containing multiple copies of TatA, TatB and TatC subunits, and a separate TatA complex, containing only TatA subunits. Substrates initially bind to the TatABC complex, which probably triggers association of the separate TatA complex to form the active translocon.

The protein localises to the cell inner membrane. Part of the twin-arginine translocation (Tat) system that transports large folded proteins containing a characteristic twin-arginine motif in their signal peptide across membranes. TatA could form the protein-conducting channel of the Tat system. In Bradyrhizobium diazoefficiens (strain JCM 10833 / BCRC 13528 / IAM 13628 / NBRC 14792 / USDA 110), this protein is Sec-independent protein translocase protein TatA.